The chain runs to 65 residues: Putative beta-neurotoxin RjAa7 (65 aa).

In terms of domain architecture, LCN-type CS-alpha/beta spans 1-64 (KEGYPVGRDG…VWDSSTNKCG (64 aa)). 4 cysteine pairs are disulfide-bonded: Cys-11–Cys-63, Cys-15–Cys-37, Cys-22–Cys-44, and Cys-26–Cys-46.

Belongs to the long (4 C-C) scorpion toxin superfamily. Sodium channel inhibitor family. Beta subfamily. In terms of tissue distribution, expressed by the venom gland.

The protein localises to the secreted. Its function is as follows. Beta toxins bind voltage-independently at site-4 of sodium channels (Nav) and shift the voltage of activation toward more negative potentials thereby affecting sodium channel activation and promoting spontaneous and repetitive firing. In Rhopalurus junceus (Caribbean blue scorpion), this protein is Putative beta-neurotoxin RjAa7.